The primary structure comprises 370 residues: Luciferin sulfotransferase (370 aa).

90 to 95 is a binding site for 3'-phosphoadenylyl sulfate; sequence KAGTTW. H165 (proton acceptor) is an active-site residue. 3'-phosphoadenylyl sulfate contacts are provided by residues R189, S197, Y250, 284–289, and 316–320; these read LSFESM and FMRSG.

It belongs to the sulfotransferase 1 family.

It catalyses the reaction firefly D-luciferin + 3'-phosphoadenylyl sulfate = firefly D-sulfoluciferin + adenosine 3',5'-bisphosphate + H(+). It carries out the reaction firefly L-luciferin + 3'-phosphoadenylyl sulfate = firefly L-sulfoluciferin + adenosine 3',5'-bisphosphate + H(+). Its activity is regulated as follows. Sulfoluciferin formation is inhibited by the product adenosine 3',5'-bisphosphate. Its function is as follows. Catalyzes the production of firefly sulfoluciferin from luciferin using the sulfo-donor 3'-phosphoadenylyl sulfate (PAPS). Is also able to catalyze the reverse reaction, i.e. the adenosine 3',5'-bisphosphate-dependent desulfonation of sulfoluciferin. Can use either D- or L-luciferin stereoisomer as substrate. Sulfoluciferin, which is not a substrate of P.pyralis luciferase, likely serves as a luciferin storage form in fireflies. This Photinus pyralis (Common eastern firefly) protein is Luciferin sulfotransferase.